The following is a 352-amino-acid chain: N-acetyl-gamma-glutamyl-phosphate reductase (352 aa).

Residue Cys-155 is part of the active site.

It belongs to the NAGSA dehydrogenase family. Type 1 subfamily.

It is found in the cytoplasm. It carries out the reaction N-acetyl-L-glutamate 5-semialdehyde + phosphate + NADP(+) = N-acetyl-L-glutamyl 5-phosphate + NADPH + H(+). Its pathway is amino-acid biosynthesis; L-arginine biosynthesis; N(2)-acetyl-L-ornithine from L-glutamate: step 3/4. Catalyzes the NADPH-dependent reduction of N-acetyl-5-glutamyl phosphate to yield N-acetyl-L-glutamate 5-semialdehyde. In Gloeothece citriformis (strain PCC 7424) (Cyanothece sp. (strain PCC 7424)), this protein is N-acetyl-gamma-glutamyl-phosphate reductase.